A 422-amino-acid polypeptide reads, in one-letter code: MAKTIQAIRGMNDCLPTQSPLWQKVEGSVKRVISAYGYNEVRMPIVEQTHLFKRAIGEVTDVVEKEMYTFEDRNGDSLTLRPEGTAGCVRAGIENGLLYNQEQRLWYMGPMFRHERPQKGRYRQFHQVGVEVFGLNGPDVDAELIMMTARLWRELGIDQHVRLELNSIGSLEARANYRTALVAFLEQHLDVLDEDCKRRMHTNPMRVLDTKNPDVQAILGDAPKLSEYLDDDSKAHFSGLCELLDAAGIQYQVNERLVRGLDYYNRTVFEWITESLGAQGTVCGGGRYDGLVEQLGGKTTPAVGFAMGLERLVLLMETLELTDVRRSVDVYMVTAGEGTLMAGMKLAESLREQVPGLRVMCHFGGGNFKKQFKRADNAGAAVALILGETEVAEQTVNVKDLRNGEQVTLPQSDVFTKLAELI.

It belongs to the class-II aminoacyl-tRNA synthetase family. In terms of assembly, homodimer.

Its subcellular location is the cytoplasm. It catalyses the reaction tRNA(His) + L-histidine + ATP = L-histidyl-tRNA(His) + AMP + diphosphate + H(+). This is Histidine--tRNA ligase from Aliivibrio fischeri (strain ATCC 700601 / ES114) (Vibrio fischeri).